A 360-amino-acid chain; its full sequence is Lipid-A-disaccharide synthase (360 aa).

Belongs to the LpxB family.

It catalyses the reaction a lipid X + a UDP-2-N,3-O-bis[(3R)-3-hydroxyacyl]-alpha-D-glucosamine = a lipid A disaccharide + UDP + H(+). Its pathway is bacterial outer membrane biogenesis; LPS lipid A biosynthesis. Its function is as follows. Condensation of UDP-2,3-diacylglucosamine and 2,3-diacylglucosamine-1-phosphate to form lipid A disaccharide, a precursor of lipid A, a phosphorylated glycolipid that anchors the lipopolysaccharide to the outer membrane of the cell. The protein is Lipid-A-disaccharide synthase of Helicobacter acinonychis (strain Sheeba).